A 451-amino-acid polypeptide reads, in one-letter code: Pre-mRNA-splicing factor PRP46 (451 aa).

WD repeat units follow at residues 137–168 (GHLGWVRCVAIDPVDNEWFITGSNDTTMKVWD), 180–210 (GHVMTVRDVAVSDRHPYLFSVSEDKTVKCWD), 222–252 (GHLSGVRTVSIHPTLDLIATAGRDSVIKLWD), 264–294 (GHKGPINQVQCTPVDPQVVSSSTDATVRLWD), 306–335 (HHKRSVRATALHPKEFSVASACTDDIRSWG), 348–377 (EKTGIINTLSINQDDVLFAGGDNGVLSFYD), and 397–427 (EGERSVLCSTFDKTGLRLITGEADKSIKIWK).

It belongs to the WD repeat PRL1/PRL2 family. Belongs to the CWC complex (or CEF1-associated complex), a spliceosome subcomplex composed of the U2, U5 and U6 snRNAs and at least BUD13, BUD31, BRR2, CDC40, CEF1, CLF1, CUS1, CWC2, CWC15, CWC21, CWC22, CWC23, CWC24, CWC25, CWC27, ECM2, HSH155, IST3, ISY1, LEA1, MSL1, NTC20, PRP8, PRP9, PRP11, PRP19, PRP21, PRP22, PRP45, PRP46, SLU7, SMB1, SMD1, SMD2, SMD3, SMX2, SMX3, SNT309, SNU114, SPP2, SYF1, SYF2, RSE1 and YJU2. Interacts with CEF1, CLF1, NTC20, PRP45 and SYF1.

It localises to the cytoplasm. Its subcellular location is the nucleus. Its function is as follows. Involved in pre-mRNA splicing. May also be required for cell cycle progression at G2/M. The polypeptide is Pre-mRNA-splicing factor PRP46 (PRP46) (Saccharomyces cerevisiae (strain ATCC 204508 / S288c) (Baker's yeast)).